The primary structure comprises 228 residues: ATP synthase subunit a (228 aa).

The next 6 membrane-spanning stretches (helical) occupy residues Tyr-14 to Phe-34, Trp-71 to Leu-91, Ile-101 to Tyr-121, Phe-139 to Leu-159, Ala-165 to Met-185, and Val-188 to Val-208.

This sequence belongs to the ATPase A chain family. F-type ATPases have 2 components, CF(1) - the catalytic core - and CF(0) - the membrane proton channel. CF(1) has five subunits: alpha(3), beta(3), gamma(1), delta(1), epsilon(1). CF(0) has three main subunits: a, b and c.

Its subcellular location is the mitochondrion inner membrane. Its function is as follows. Mitochondrial membrane ATP synthase (F(1)F(0) ATP synthase or Complex V) produces ATP from ADP in the presence of a proton gradient across the membrane which is generated by electron transport complexes of the respiratory chain. F-type ATPases consist of two structural domains, F(1) - containing the extramembraneous catalytic core and F(0) - containing the membrane proton channel, linked together by a central stalk and a peripheral stalk. During catalysis, ATP synthesis in the catalytic domain of F(1) is coupled via a rotary mechanism of the central stalk subunits to proton translocation. Key component of the proton channel; it may play a direct role in the translocation of protons across the membrane. This chain is ATP synthase subunit a (ATP6), found in Pisaster ochraceus (Ochre sea star).